An 857-amino-acid polypeptide reads, in one-letter code: DNA mismatch repair protein MutS (857 aa).

An ATP-binding site is contributed by Gly621–Ser628.

Belongs to the DNA mismatch repair MutS family.

In terms of biological role, this protein is involved in the repair of mismatches in DNA. It is possible that it carries out the mismatch recognition step. This protein has a weak ATPase activity. The protein is DNA mismatch repair protein MutS of Francisella tularensis subsp. tularensis (strain SCHU S4 / Schu 4).